The following is a 288-amino-acid chain: Ribosomal RNA small subunit methyltransferase A (288 aa).

The S-adenosyl-L-methionine site is built by Asn-18, Leu-20, Gly-45, Glu-66, Asp-91, and Asn-118.

This sequence belongs to the class I-like SAM-binding methyltransferase superfamily. rRNA adenine N(6)-methyltransferase family. RsmA subfamily.

The protein resides in the cytoplasm. It carries out the reaction adenosine(1518)/adenosine(1519) in 16S rRNA + 4 S-adenosyl-L-methionine = N(6)-dimethyladenosine(1518)/N(6)-dimethyladenosine(1519) in 16S rRNA + 4 S-adenosyl-L-homocysteine + 4 H(+). Functionally, specifically dimethylates two adjacent adenosines (A1518 and A1519) in the loop of a conserved hairpin near the 3'-end of 16S rRNA in the 30S particle. May play a critical role in biogenesis of 30S subunits. This chain is Ribosomal RNA small subunit methyltransferase A, found in Mannheimia succiniciproducens (strain KCTC 0769BP / MBEL55E).